We begin with the raw amino-acid sequence, 159 residues long: 3-hydroxyacyl-[acyl-carrier-protein] dehydratase FabZ (159 aa).

His65 is an active-site residue.

This sequence belongs to the thioester dehydratase family. FabZ subfamily.

Its subcellular location is the cytoplasm. The enzyme catalyses a (3R)-hydroxyacyl-[ACP] = a (2E)-enoyl-[ACP] + H2O. Involved in unsaturated fatty acids biosynthesis. Catalyzes the dehydration of short chain beta-hydroxyacyl-ACPs and long chain saturated and unsaturated beta-hydroxyacyl-ACPs. The polypeptide is 3-hydroxyacyl-[acyl-carrier-protein] dehydratase FabZ (Microcystis aeruginosa (strain NIES-843 / IAM M-2473)).